A 287-amino-acid chain; its full sequence is Intermediate filament family orphan 2 (287 aa).

The IF rod domain maps to 1 to 254; sequence MNLQTMVDTL…RLIKGSADRN (254 aa). The disordered stretch occupies residues 248-287; that stretch reads KGSADRNSPSPSSVASSDSGSTDEIQDDLEREADVEPMVS. Residues 255-267 show a composition bias toward low complexity; it reads SPSPSSVASSDSG. Over residues 271-287 the composition is skewed to acidic residues; it reads EIQDDLEREADVEPMVS.

It belongs to the intermediate filament family.

The sequence is that of Intermediate filament family orphan 2 (Iffo2) from Rattus norvegicus (Rat).